The sequence spans 205 residues: Meiotic nuclear division protein 1 homolog (205 aa).

Positions 79 to 147 (LHARKRKLET…CADLEKYKEC (69 aa)) form a coiled coil.

Belongs to the MND1 family.

It is found in the nucleus. Functionally, required for proper homologous chromosome pairing and efficient cross-over and intragenic recombination during meiosis. Stimulates both dmc1- and rad51-mediated homologous strand assimilation, which is required for the resolution of meiotic double-strand breaks. The protein is Meiotic nuclear division protein 1 homolog of Xenopus laevis (African clawed frog).